Consider the following 150-residue polypeptide: Heavy metal-associated isoprenylated plant protein 24 (150 aa).

Positions 26–89 (QTVALRVARI…AAKSTKKKVE (64 aa)) constitute an HMA domain. A metal cation-binding residues include Cys-37 and Cys-40. Cys-147 carries the cysteine methyl ester modification. The S-farnesyl cysteine moiety is linked to residue Cys-147. Residues 148 to 150 (AIM) constitute a propeptide, removed in mature form.

This sequence belongs to the HIPP family. As to quaternary structure, interacts with ZHD11/HB29.

Functionally, heavy-metal-binding protein. This is Heavy metal-associated isoprenylated plant protein 24 from Arabidopsis thaliana (Mouse-ear cress).